The following is a 606-amino-acid chain: MGMWEEASDTGMKGKKKKKDKNEEEEERGKKERMVNLTLEMIYLLTGEHYIPRKKSDDGGALHAPGSVIQKENNKNDKKILELMSNIIQLLTGEVAIRTHHVSIYFSLDEWDYIKGNKDLYEDGMKEEPQQLHPLAVCEYKDESNVTAHMESTLGCNNDGNLTKMSPVEQPPPANGIKEEVASCEEINQSDCSINPFTEQIQGTDTPTPIMGCSHFKTKVNKYDINSYWSPDESGITKSTLHSKDSCNEGHKHLSHKSDYNKHQNPHKRQKSFSCSKCGKCFSNLTSLHCHQKTHKGKKLLCLKCGKCFATSSKLIIHRQTHMDKKHFSCSECRICFSKQSSLARHQITHTEEKPLASSECGKCFASLSELTVHQRTNTGEKHDFCSECGKCFATSSQLIAHQQQVHIEVKPFSCTKCGKCFSYRSRLVRHQRTHTGVKPYSCSECGKCFASSSHLIGHRQQVHMEGKTFFCSECGKYFLYQSQLVRHQRTHTGEKPYSCSECGKCFATSSQLMAHQQQVHIEVKPFSCSECGKYFLYRAHLVRHQRTHTGEKPDFCFECGKCFATSLQLIAHQQQVHMEVKQFSCSECGKSFLYRSHLARHHRTH.

2 disordered regions span residues 1-31 and 240-271; these read MGMW…RGKK and TLHS…KRQK. Positions 242 to 262 are enriched in basic and acidic residues; it reads HSKDSCNEGHKHLSHKSDYNK. 11 consecutive C2H2-type zinc fingers follow at residues 273–295, 300–322, 328–350, 384–407, 413–435, 441–464, 470–492, 498–521, 527–549, 555–578, and 584–606; these read FSCS…QKTH, LLCL…RQTH, FSCS…QITH, DFCS…QQVH, FSCT…QRTH, YSCS…QQVH, FFCS…QRTH, FSCS…QRTH, DFCF…QQVH, and FSCS…HRTH.

Belongs to the krueppel C2H2-type zinc-finger protein family.

It is found in the nucleus. Functionally, may be involved in transcriptional regulation. This chain is Gastrula zinc finger protein XlCGF66.1, found in Xenopus laevis (African clawed frog).